Reading from the N-terminus, the 761-residue chain is Ribonucleoside-diphosphate reductase subunit alpha (761 aa).

The ATP-cone domain maps to 5–95; the sequence is LFVTKRDGRK…IFHLRKKAYG (91 aa). ATP contacts are provided by residues lysine 9, 15 to 21, threonine 55, and lysine 91; that span reads EKINLDK. A GDP-binding site is contributed by threonine 209. Cysteine 225 and cysteine 462 form a disulfide bridge. Residues 232-234, arginine 262, and arginine 269 each bind dTTP; that span reads DSL. A GDP-binding site is contributed by asparagine 437. The active-site Proton acceptor is the asparagine 437. The active-site Cysteine radical intermediate is cysteine 439. GDP-binding positions include glutamate 441 and 623-625; that span reads ETS. Glutamate 441 serves as the catalytic Proton acceptor.

This sequence belongs to the ribonucleoside diphosphate reductase large chain family. As to quaternary structure, tetramer of two alpha and two beta subunits.

The catalysed reaction is a 2'-deoxyribonucleoside 5'-diphosphate + [thioredoxin]-disulfide + H2O = a ribonucleoside 5'-diphosphate + [thioredoxin]-dithiol. Under complex allosteric control mediated by deoxynucleoside triphosphates and ATP binding to separate specificity and activation sites on the alpha subunit. The type of nucleotide bound at the specificity site determines substrate preference. It seems probable that ATP makes the enzyme reduce CDP and UDP, dGTP favors ADP reduction and dTTP favors GDP reduction. Stimulated by ATP and inhibited by dATP binding to the activity site. Its function is as follows. Provides the precursors necessary for DNA synthesis. Catalyzes the biosynthesis of deoxyribonucleotides from the corresponding ribonucleotides. The chain is Ribonucleoside-diphosphate reductase subunit alpha (nrdA) from Buchnera aphidicola subsp. Acyrthosiphon pisum (strain APS) (Acyrthosiphon pisum symbiotic bacterium).